A 923-amino-acid polypeptide reads, in one-letter code: Cell cycle and apoptosis regulator protein 2 (923 aa).

The tract at residues 1–35 is disordered; the sequence is MSQFKRQRINPLPGGRNFSGTASTSLLGPPPGLLT. Threonine 35 carries the post-translational modification Phosphothreonine. The residue at position 112 (lysine 112) is an N6-acetyllysine; by KAT8. At lysine 123 the chain carries N6-methyllysine. Serine 124 carries the phosphoserine modification. Disordered stretches follow at residues 178 to 218, 446 to 510, and 568 to 643; these read LNRF…KKPR, KAAE…PAVI, and VSPP…SEDL. Arginine 180 carries the post-translational modification Omega-N-methylarginine. Residues 188 to 200 show a composition bias toward basic and acidic residues; sequence GRLDQGRSDDYDS. Residue lysine 215 is modified to N6-acetyllysine; by KAT8. The span at 446–458 shows a compositional bias: low complexity; that stretch reads KAAEAAPPTQEAQ. Threonine 454 bears the Phosphothreonine; by ATM, ATR and CK2 mark. At threonine 484 the chain carries Phosphothreonine. Phosphoserine is present on serine 569. A compositionally biased stretch (basic and acidic residues) spans 572–602; it reads EPEKEEAAKEEATKEEEAIKEEVVKEPKDEA. A Glycyl lysine isopeptide (Lys-Gly) (interchain with G-Cter in SUMO2 and SUMO3); alternate cross-link involves residue lysine 591. A Glycyl lysine isopeptide (Lys-Gly) (interchain with G-Cter in SUMO2); alternate cross-link involves residue lysine 591. Residues 610–670 are interaction with MCC; sequence ESEAPLKEDG…EEFAGAKLED (61 aa). Residues serine 627, serine 675, serine 678, serine 681, serine 687, and serine 808 each carry the phosphoserine modification. Residues 704–923 are interaction with NR1D1; the sequence is DCLLAFVFFD…VEKEEPAPSN (220 aa). Residues 829–909 adopt a coiled-coil conformation; it reads LENKIHTLEL…QLEIQRVVEK (81 aa). Phosphothreonine is present on threonine 897.

In terms of assembly, component of the DBIRD complex. Interacts with ZNF326/ZIRD; the interaction is direct. Interacts (via N-terminus) with SIRT1, which inhibits the deacetylation of substrates. Interacts (via N-terminus) with SUV39H1; this interaction abolishes the interaction with SIRT1. Component of a nuclear receptor-mediated transcription complex composed of at least ZNF335, CCAR2 and EMSY; the complex stimulates the transcription of nuclear receptor target genes such as SOX9 and HOXA1. Within the complex interacts with EMSY and interacts with ZNF335 (via C-terminus). Components of this complex may associate with components of a histone methylation complex to form a complex at least composed of ZNF335, HCFC1, CCAR2, EMSY, MKI67, RBBP5, ASH2L and WDR5. Within this complex, interacts with ASH2L. Interacts with NR1D1. Interacts (via N-terminus) with ESR1 and ESR2. Interacts (via N-terminus) with HDAC3 (via C-terminus). Interacts with HDAC1 and MED2F. Interacts with MCC. Interacts (via N-terminus) with NR1H2 and NR1H3 in a ligand-independent manner. Interacts with CSNK2A1. Interacts (via N-terminus) with p53/TP53. Interacts (via N-terminus) with BRCA1 (via the BRCT domains). Interacts (via N-terminus) with CHEK2 (via protein kinase domain). Interacts with PSEM3. Interacts (via N-terminus) with PSIA3 and SENP1. The sumoylated form shows a preferential interaction with SIRT1 as compared to its unmodified form. Interacts with CECR2; may form part of the CERF-1 and/or CEF-5 ISWI chromatin remodeling complexes in embryonic stem cells. In terms of processing, ATM/ATR-mediated phosphorylation at Thr-454 upon DNA damage promotes binding to SIRT1. Phosphorylation at Thr-454 promotes its sumoylation by switching the binding partner of CCAR2 from SENP1 to PIAS3. Acetylation at Lys-112 and Lys-215 by KAT8 prevents inhibitory binding to SIRT1 and increases its deacetylase activity. Post-translationally, genotoxic stress induces its sumoylation and sumoylation promotes the SIRT1-CCAR2 interaction which in turn inhibits SIRT1-mediated deacetylation of p53/TP53. Sumoylation leads to transcriptional activation of p53/TP53 by sequestering SIRT1 from p53/TP53. Desumoylated by SENP1. Expressed in gastric carcinoma tissue and the expression gradually increases with the progression of the carcinoma (at protein level). Expressed ubiquitously in normal tissues. Expressed in 84 to 100% of neoplastic breast, lung, and colon tissues.

It localises to the nucleus. The protein localises to the cytoplasm. Its subcellular location is the cytoskeleton. The protein resides in the spindle. Functionally, core component of the DBIRD complex, a multiprotein complex that acts at the interface between core mRNP particles and RNA polymerase II (RNAPII) and integrates transcript elongation with the regulation of alternative splicing: the DBIRD complex affects local transcript elongation rates and alternative splicing of a large set of exons embedded in (A + T)-rich DNA regions. Inhibits SIRT1 deacetylase activity leading to increasing levels of p53/TP53 acetylation and p53-mediated apoptosis. Inhibits SUV39H1 methyltransferase activity. Mediates ligand-dependent transcriptional activation by nuclear hormone receptors. Plays a critical role in maintaining genomic stability and cellular integrity following UV-induced genotoxic stress. Regulates the circadian expression of the core clock components NR1D1 and BMAL1. Enhances the transcriptional repressor activity of NR1D1 through stabilization of NR1D1 protein levels by preventing its ubiquitination and subsequent degradation. Represses the ligand-dependent transcriptional activation function of ESR2. Acts as a regulator of PCK1 expression and gluconeogenesis by a mechanism that involves, at least in part, both NR1D1 and SIRT1. Negatively regulates the deacetylase activity of HDAC3 and can alter its subcellular localization. Positively regulates the beta-catenin pathway (canonical Wnt signaling pathway) and is required for MCC-mediated repression of the beta-catenin pathway. Represses ligand-dependent transcriptional activation function of NR1H2 and NR1H3 and inhibits the interaction of SIRT1 with NR1H3. Plays an important role in tumor suppression through p53/TP53 regulation; stabilizes p53/TP53 by affecting its interaction with ubiquitin ligase MDM2. Represses the transcriptional activator activity of BRCA1. Inhibits SIRT1 in a CHEK2 and PSEM3-dependent manner and inhibits the activity of CHEK2 in vitro. This is Cell cycle and apoptosis regulator protein 2 (CCAR2) from Homo sapiens (Human).